The chain runs to 427 residues: 3-phosphoshikimate 1-carboxyvinyltransferase (427 aa).

3-phosphoshikimate-binding residues include K22, S23, and R27. K22 is a binding site for phosphoenolpyruvate. Phosphoenolpyruvate-binding residues include G96 and R124. S169, S170, Q171, S197, D313, N336, and K340 together coordinate 3-phosphoshikimate. A phosphoenolpyruvate-binding site is contributed by Q171. Catalysis depends on D313, which acts as the Proton acceptor. 3 residues coordinate phosphoenolpyruvate: R344, R386, and K411.

The protein belongs to the EPSP synthase family. Monomer.

It is found in the cytoplasm. The enzyme catalyses 3-phosphoshikimate + phosphoenolpyruvate = 5-O-(1-carboxyvinyl)-3-phosphoshikimate + phosphate. It participates in metabolic intermediate biosynthesis; chorismate biosynthesis; chorismate from D-erythrose 4-phosphate and phosphoenolpyruvate: step 6/7. In terms of biological role, catalyzes the transfer of the enolpyruvyl moiety of phosphoenolpyruvate (PEP) to the 5-hydroxyl of shikimate-3-phosphate (S3P) to produce enolpyruvyl shikimate-3-phosphate and inorganic phosphate. The protein is 3-phosphoshikimate 1-carboxyvinyltransferase of Salmonella agona (strain SL483).